Consider the following 266-residue polypeptide: Probable BRI1 kinase inhibitor 1 (266 aa).

Disordered stretches follow at residues 1-144 (MTMN…AKTR) and 167-242 (FSRH…SEES). Residues 9-30 (RSQPPPPHPPLFKPTTPPPPPL) are compositionally biased toward pro residues. Over residues 31-40 (LSTSTSTSPP) the composition is skewed to low complexity. The span at 77 to 93 (LSHNNYSSKANQHRQTG) shows a compositional bias: polar residues. Residues 100-109 (SKEKDREYKA) are compositionally biased toward basic and acidic residues. Low complexity-rich tracts occupy residues 210 to 221 (LSSAPASLRASP) and 229 to 241 (VGGS…SSEE).

Its function is as follows. Negative regulator of brassinosteroid signaling. The sequence is that of Probable BRI1 kinase inhibitor 1 (BKI1) from Oryza sativa subsp. indica (Rice).